Here is a 310-residue protein sequence, read N- to C-terminus: Transaldolase (310 aa).

Lys124 functions as the Schiff-base intermediate with substrate in the catalytic mechanism.

Belongs to the transaldolase family. Type 1 subfamily. In terms of assembly, homodimer.

Its subcellular location is the cytoplasm. It catalyses the reaction D-sedoheptulose 7-phosphate + D-glyceraldehyde 3-phosphate = D-erythrose 4-phosphate + beta-D-fructose 6-phosphate. The protein operates within carbohydrate degradation; pentose phosphate pathway; D-glyceraldehyde 3-phosphate and beta-D-fructose 6-phosphate from D-ribose 5-phosphate and D-xylulose 5-phosphate (non-oxidative stage): step 2/3. In terms of biological role, transaldolase is important for the balance of metabolites in the pentose-phosphate pathway. This chain is Transaldolase, found in Teredinibacter turnerae (strain ATCC 39867 / T7901).